The chain runs to 301 residues: Protein phosphatase 1 regulatory subunit 3B (301 aa).

Residues 79–82 (RVSF) carry the PP1-binding motif motif. The region spanning 142–250 (RNRLQAESVC…SNKGLNYRIV (109 aa)) is the CBM21 domain.

As to quaternary structure, interacts with glycogen, PPP1CC catalytic subunit of PP1 and PYGL. Associates with glycogen particles. Forms complexes with debranching enzyme, glycogen phosphorylase, glycogen synthase and phosphorylase kinase which is necessary for its regulation of PP1 activity.

Functionally, acts as a glycogen-targeting subunit for phosphatase PP1. Facilitates interaction of the PP1 with enzymes of the glycogen metabolism and regulates its activity. Suppresses the rate at which PP1 dephosphorylates (inactivates) glycogen phosphorylase and enhances the rate at which it activates glycogen synthase and therefore limits glycogen breakdown. This chain is Protein phosphatase 1 regulatory subunit 3B (ppp1r3b), found in Xenopus tropicalis (Western clawed frog).